The chain runs to 974 residues: Toxin subunit YenC1 (974 aa).

RHS repeat units lie at residues 165-179 (AGQC…GLNQ), 290-304 (GVLT…TQRL), 322-336 (FQDL…GNVL), 354-368 (VPEN…YQLV), 398-412 (NYIR…GNLM), 490-504 (SDSE…SQRV), 570-584 (NDEL…IGSS), 596-610 (SQEE…AVWM), and 630-644 (DATG…YYQP). The RHS-repeat associated core domain stretch occupies residues 600–680 (YYPYGGTAVW…PIVLHDPDGL (81 aa)). The cytotoxic necrotising factor domain stretch occupies residues 699-940 (ISSLKGTGPF…GEVSASTLLE (242 aa)).

Belongs to the RHS family. In terms of assembly, semipurified toxin complex consists of at least YenA1-YenA2-YenB-YenC1-YenC2-Chi1-Chi2. The Yen-TC:K9 subcomplex is about 26 nm tall and 22 nm in diameter with 5-fold symmetry and 5 copies of YenA1, YenA2, Chi1 and Chi2; the chitinase subunits may be solvent accessible on the exterior the complex. The Yen-TC:K9 subcomplex has no insecticidal activity. The native complex with additional YenB, YenC1 and YenC2 subunits is 16 nm taller and is insecticidal; the toxicity-conferring subunits are present at about 1 copy each.

The protein resides in the secreted. With respect to regulation, toxin complex is secreted when grown at 25 degrees Celsius or less; at higher temperatures the proteins are present intracellularly but not secreted. Part of an orally active toxin complex (TC) with strong insecticidal effects on larvae of the Coleoptera Costelytra zealandica, Acrossidius tasmania and Adoryphorus couloni and some Lepidoptera larvae. The TC has an endochitinase activity. This is Toxin subunit YenC1 from Yersinia entomophaga.